Here is a 288-residue protein sequence, read N- to C-terminus: ATP synthase gamma chain (288 aa).

It belongs to the ATPase gamma chain family. In terms of assembly, F-type ATPases have 2 components, CF(1) - the catalytic core - and CF(0) - the membrane proton channel. CF(1) has five subunits: alpha(3), beta(3), gamma(1), delta(1), epsilon(1). CF(0) has three main subunits: a, b and c.

It localises to the cell inner membrane. Its function is as follows. Produces ATP from ADP in the presence of a proton gradient across the membrane. The gamma chain is believed to be important in regulating ATPase activity and the flow of protons through the CF(0) complex. The chain is ATP synthase gamma chain from Vesicomyosocius okutanii subsp. Calyptogena okutanii (strain HA).